Reading from the N-terminus, the 206-residue chain is uncharacterized protein (206 aa).

The next 4 membrane-spanning stretches (helical) occupy residues 9-29 (ILSL…SVLT), 47-67 (LGVV…LAFL), 74-94 (FFVI…INTI), and 150-170 (IAVI…FYAF).

This sequence belongs to the Rht family.

Its subcellular location is the cell membrane. This is an uncharacterized protein from Synechocystis sp. (strain ATCC 27184 / PCC 6803 / Kazusa).